Here is an 87-residue protein sequence, read N- to C-terminus: UPF0248 protein TSIB_1445 (87 aa).

It belongs to the UPF0248 family.

This Thermococcus sibiricus (strain DSM 12597 / MM 739) protein is UPF0248 protein TSIB_1445.